The chain runs to 78 residues: U-scoloptoxin(04)-Er1d (78 aa).

The N-terminal stretch at 1 to 24 is a signal peptide; the sequence is MTRHLIFAAMLLVCLFVCWNAVGA. A propeptide spanning residues 25–28 is cleaved from the precursor; it reads RDAR.

This sequence belongs to the scoloptoxin-04 family. In terms of processing, contains 2 disulfide bonds. As to expression, expressed by the venom gland.

The protein resides in the secreted. The chain is U-scoloptoxin(04)-Er1d from Ethmostigmus rubripes (Giant centipede).